The sequence spans 469 residues: Probable acetate kinase (469 aa).

Asn-30 lines the Mg(2+) pocket. Lys-37 lines the ATP pocket. A substrate-binding site is contributed by Arg-122. The active-site Proton donor/acceptor is the Asp-179. 239 to 243 (HLGSG) provides a ligand contact to ATP. Glu-453 contributes to the Mg(2+) binding site.

Belongs to the acetokinase family. Requires Mg(2+) as cofactor.

The catalysed reaction is acetate + ATP = acetyl phosphate + ADP. It functions in the pathway metabolic intermediate biosynthesis; acetyl-CoA biosynthesis; acetyl-CoA from acetate: step 1/2. The sequence is that of Probable acetate kinase from Neurospora crassa (strain ATCC 24698 / 74-OR23-1A / CBS 708.71 / DSM 1257 / FGSC 987).